The sequence spans 390 residues: Queuine tRNA-ribosyltransferase (390 aa).

Aspartate 92 serves as the catalytic Proton acceptor. Residues 92 to 96, aspartate 146, glutamine 195, and glycine 222 each bind substrate; that span reads DSGGF. Positions 253 to 259 are RNA binding; that stretch reads GVGTPED. Aspartate 272 functions as the Nucleophile in the catalytic mechanism. The segment at 277 to 281 is RNA binding; important for wobble base 34 recognition; that stretch reads TRNAR. 4 residues coordinate Zn(2+): cysteine 310, cysteine 312, cysteine 315, and histidine 354.

The protein belongs to the queuine tRNA-ribosyltransferase family. As to quaternary structure, homodimer. Within each dimer, one monomer is responsible for RNA recognition and catalysis, while the other monomer binds to the replacement base PreQ1. Requires Zn(2+) as cofactor.

It carries out the reaction 7-aminomethyl-7-carbaguanine + guanosine(34) in tRNA = 7-aminomethyl-7-carbaguanosine(34) in tRNA + guanine. Its pathway is tRNA modification; tRNA-queuosine biosynthesis. Its function is as follows. Catalyzes the base-exchange of a guanine (G) residue with the queuine precursor 7-aminomethyl-7-deazaguanine (PreQ1) at position 34 (anticodon wobble position) in tRNAs with GU(N) anticodons (tRNA-Asp, -Asn, -His and -Tyr). Catalysis occurs through a double-displacement mechanism. The nucleophile active site attacks the C1' of nucleotide 34 to detach the guanine base from the RNA, forming a covalent enzyme-RNA intermediate. The proton acceptor active site deprotonates the incoming PreQ1, allowing a nucleophilic attack on the C1' of the ribose to form the product. After dissociation, two additional enzymatic reactions on the tRNA convert PreQ1 to queuine (Q), resulting in the hypermodified nucleoside queuosine (7-(((4,5-cis-dihydroxy-2-cyclopenten-1-yl)amino)methyl)-7-deazaguanosine). This chain is Queuine tRNA-ribosyltransferase, found in Paracidovorax citrulli (strain AAC00-1) (Acidovorax citrulli).